We begin with the raw amino-acid sequence, 338 residues long: Malate dehydrogenase, mitochondrial (338 aa).

The transit peptide at 1–24 directs the protein to the mitochondrion; it reads MLSALARPASAALRRSFSTSAQNN. NAD(+) contacts are provided by residues 31 to 37 and D57; that span reads GASGGIG. Residue S33 is glycosylated (O-linked (GlcNAc) serine). Residues K78 and K91 each carry the N6-acetyllysine; alternate modification. 2 positions are modified to N6-succinyllysine; alternate: K78 and K91. Substrate contacts are provided by R104 and R110. NAD(+) contacts are provided by residues N117 and 140-142; that span reads IAN. Residue N142 coordinates substrate. K165 bears the N6-acetyllysine mark. R176 serves as a coordination point for substrate. K185 is subject to N6-acetyllysine; alternate. K185 carries the post-translational modification N6-succinyllysine; alternate. H200 (proton acceptor) is an active-site residue. K203 bears the N6-succinyllysine mark. An N6-acetyllysine; alternate mark is found at K215 and K239. K215 and K239 each carry N6-succinyllysine; alternate. K239 bears the N6-malonyllysine; alternate mark. Phosphoserine is present on S246. M251 is an NAD(+) binding site. An N6-succinyllysine modification is found at K269. Residues K296, K301, K314, and K324 each carry the N6-acetyllysine; alternate modification. Residues K296, K301, K314, and K324 each carry the N6-succinyllysine; alternate modification. Residue S326 is modified to Phosphoserine. N6-acetyllysine; alternate is present on residues K328, K329, and K335. K328 is subject to N6-succinyllysine; alternate. K329 carries the post-translational modification N6-malonyllysine; alternate. Residue K335 is modified to N6-succinyllysine; alternate.

It belongs to the LDH/MDH superfamily. MDH type 1 family. In terms of assembly, homodimer. In terms of processing, acetylation is enhanced after treatment either with trichostin A (TCA) or with nicotinamide (NAM) with the appearance of tri- and tetraacetylations. Glucose also increases acetylation.

It localises to the mitochondrion matrix. It carries out the reaction (S)-malate + NAD(+) = oxaloacetate + NADH + H(+). Enzyme activity is enhanced by acetylation. The protein is Malate dehydrogenase, mitochondrial (MDH2) of Macaca fascicularis (Crab-eating macaque).